The primary structure comprises 205 residues: Holliday junction branch migration complex subunit RuvA (205 aa).

Residues 1 to 64 (MIGKLKGVID…EDMIRLYGFA (64 aa)) form a domain I region. The tract at residues 65–143 (TQLEREWFRL…AFAGEASGTI (79 aa)) is domain II. Residues 144–152 (GLKQELGAG) form a flexible linker region. The tract at residues 153 to 205 (AAPAPVADAVSALSNLGYSRDQAANAVAAALKETGEGADSAKLIRLGLKELSQ) is domain III.

The protein belongs to the RuvA family. Homotetramer. Forms an RuvA(8)-RuvB(12)-Holliday junction (HJ) complex. HJ DNA is sandwiched between 2 RuvA tetramers; dsDNA enters through RuvA and exits via RuvB. An RuvB hexamer assembles on each DNA strand where it exits the tetramer. Each RuvB hexamer is contacted by two RuvA subunits (via domain III) on 2 adjacent RuvB subunits; this complex drives branch migration. In the full resolvosome a probable DNA-RuvA(4)-RuvB(12)-RuvC(2) complex forms which resolves the HJ.

The protein resides in the cytoplasm. In terms of biological role, the RuvA-RuvB-RuvC complex processes Holliday junction (HJ) DNA during genetic recombination and DNA repair, while the RuvA-RuvB complex plays an important role in the rescue of blocked DNA replication forks via replication fork reversal (RFR). RuvA specifically binds to HJ cruciform DNA, conferring on it an open structure. The RuvB hexamer acts as an ATP-dependent pump, pulling dsDNA into and through the RuvAB complex. HJ branch migration allows RuvC to scan DNA until it finds its consensus sequence, where it cleaves and resolves the cruciform DNA. This Brucella abortus (strain S19) protein is Holliday junction branch migration complex subunit RuvA.